Reading from the N-terminus, the 136-residue chain is Large-conductance mechanosensitive channel (136 aa).

A run of 2 helical transmembrane segments spans residues 9–29 and 79–99; these read AFASRGNVIDMAVGIIIGAAF and IQTVIDFTIIAFAIFMGLKAI.

This sequence belongs to the MscL family. As to quaternary structure, homopentamer.

It localises to the cell inner membrane. Channel that opens in response to stretch forces in the membrane lipid bilayer. May participate in the regulation of osmotic pressure changes within the cell. The polypeptide is Large-conductance mechanosensitive channel (Shewanella sp. (strain W3-18-1)).